Consider the following 172-residue polypeptide: NADH-ubiquinone oxidoreductase chain 6 (172 aa).

6 helical membrane passes run Met-1–Leu-21, Pro-25–Tyr-45, Gly-48–Val-68, Val-86–Asn-106, Phe-108–Ala-128, and Leu-141–Val-161.

It belongs to the complex I subunit 6 family.

It localises to the mitochondrion membrane. The catalysed reaction is a ubiquinone + NADH + 5 H(+)(in) = a ubiquinol + NAD(+) + 4 H(+)(out). In terms of biological role, core subunit of the mitochondrial membrane respiratory chain NADH dehydrogenase (Complex I) that is believed to belong to the minimal assembly required for catalysis. Complex I functions in the transfer of electrons from NADH to the respiratory chain. The immediate electron acceptor for the enzyme is believed to be ubiquinone. The chain is NADH-ubiquinone oxidoreductase chain 6 (MT-ND6) from Petromyzon marinus (Sea lamprey).